The chain runs to 475 residues: Sulfate adenylyltransferase subunit 1 (475 aa).

Residues 25 to 239 (KSLLRFLTCG…EVLETVEIQR (215 aa)) form the tr-type G domain. The tract at residues 34-41 (GSVDDGKS) is G1. 34 to 41 (GSVDDGKS) contributes to the GTP binding site. Residues 92-96 (GITID) form a G2 region. The G3 stretch occupies residues 113 to 116 (DTPG). Residues 113–117 (DTPGH) and 168–171 (NKMD) contribute to the GTP site. The interval 168 to 171 (NKMD) is G4. The tract at residues 206–208 (SAL) is G5.

It belongs to the TRAFAC class translation factor GTPase superfamily. Classic translation factor GTPase family. CysN/NodQ subfamily. Heterodimer composed of CysD, the smaller subunit, and CysN.

It catalyses the reaction sulfate + ATP + H(+) = adenosine 5'-phosphosulfate + diphosphate. Its pathway is sulfur metabolism; hydrogen sulfide biosynthesis; sulfite from sulfate: step 1/3. In terms of biological role, with CysD forms the ATP sulfurylase (ATPS) that catalyzes the adenylation of sulfate producing adenosine 5'-phosphosulfate (APS) and diphosphate, the first enzymatic step in sulfur assimilation pathway. APS synthesis involves the formation of a high-energy phosphoric-sulfuric acid anhydride bond driven by GTP hydrolysis by CysN coupled to ATP hydrolysis by CysD. The protein is Sulfate adenylyltransferase subunit 1 of Citrobacter koseri (strain ATCC BAA-895 / CDC 4225-83 / SGSC4696).